The primary structure comprises 240 residues: Putative peptidoglycan hydrolase Rv2525c (240 aa).

Positions 1 to 33 (MSVSRRDVLKFAAATPGVLGLGVVASSLRAAPA) form a signal peptide, tat-type signal.

In terms of processing, predicted to be exported by the Tat system. The position of the signal peptide cleavage has not been experimentally proven.

The protein localises to the secreted. It catalyses the reaction Hydrolysis of (1-&gt;4)-beta-linkages between N-acetylmuramic acid and N-acetyl-D-glucosamine residues in a peptidoglycan and between N-acetyl-D-glucosamine residues in chitodextrins.. It participates in cell wall degradation; peptidoglycan degradation. In terms of biological role, may function as a peptidoglycan hydrolase with glycosidase activity. In vitro, displays esterase activity toward p-nitrophenyl esters of various acyl chain length (C4 to C16), with a preference for p-nitrophenyl butyrate (C4). This Mycobacterium tuberculosis (strain ATCC 25618 / H37Rv) protein is Putative peptidoglycan hydrolase Rv2525c.